Here is a 223-residue protein sequence, read N- to C-terminus: DNA mismatch repair protein MutH (223 aa).

Belongs to the MutH family.

The protein resides in the cytoplasm. In terms of biological role, sequence-specific endonuclease that cleaves unmethylated GATC sequences. It is involved in DNA mismatch repair. This is DNA mismatch repair protein MutH from Haemophilus influenzae (strain PittEE).